A 66-amino-acid polypeptide reads, in one-letter code: M-poneratoxin-Dq3a (66 aa).

The N-terminal stretch at 1–23 (MKLSALSIIFGMILVMTIMYTKA) is a signal peptide. The propeptide occupies 24–43 (EAEAEAEADADADAKAEAEA).

It belongs to the non-disulfide-bridged peptide (NDBP) superfamily. Medium-length antimicrobial peptide (group 3) family. Ponericin-W subfamily. As to expression, expressed by the venom gland.

The protein localises to the secreted. The protein resides in the target cell membrane. May have antimicrobial properties by disrupting the integrity of the bacterial cell membrane. In addition, when tested in vitro on the parasite Trypanosoma cruzi (responsible of the Chagas disease), is able to potently reduce the number of the three forms (epimastigote, trypomastigote and amastigote) by inducing cell death through necrosis. In terms of biological role, may have antimicrobial properties by disrupting the integrity of the bacterial cell membrane. In addition, when tested in vitro on the parasite Trypanosoma cruzi (responsible of the Chagas disease), is able to moderately reduce the number of the forms epimastigote and trypomastigote. Its activity on the amastigote form has not been tested. Its function is as follows. May have antimicrobial properties by disrupting the integrity of the bacterial cell membrane. In addition, when tested in vitro on the parasite Trypanosoma cruzi (responsible of the Chagas disease), shows only a weak reduction of the number of the trypomastigote forms. Has no activity on the epimastigote forms. Its activity on the amastigote form has not been tested. This Dinoponera quadriceps (South American ant) protein is M-poneratoxin-Dq3a.